Reading from the N-terminus, the 344-residue chain is Adenosine kinase 1 (344 aa).

Asp299 is an active-site residue.

Belongs to the carbohydrate kinase PfkB family. As to quaternary structure, interacts with the begomovirus AL2 protein and the curtovirus L2 protein. It depends on Mg(2+) as a cofactor. Widely expressed.

It catalyses the reaction adenosine + ATP = AMP + ADP + H(+). The protein operates within purine metabolism; AMP biosynthesis via salvage pathway; AMP from adenosine: step 1/1. Inactivated by the begomovirus AL2 protein or the curtovirus L2 protein. ATP dependent phosphorylation of adenosine and other related nucleoside analogs to monophosphate derivatives. Essential to sustain methyl recycling. This chain is Adenosine kinase 1, found in Arabidopsis thaliana (Mouse-ear cress).